The chain runs to 893 residues: Sulfate permease 2 (893 aa).

A disordered region spans residues 1–25 (MSREGYPNFEEVEIPDFQETNNTVP). Topologically, residues 1–131 (MSREGYPNFE…VFPIINWLPH (131 aa)) are cytoplasmic. Residues 132 to 152 (YNFSWFTADLIAGITIGCVLV) form a helical membrane-spanning segment. The Extracellular segment spans residues 153–163 (PQSMSYAQVAT). The chain crosses the membrane as a helical span at residues 164 to 184 (LPAQYGLYSSFIGAYSYSFFA). The Cytoplasmic segment spans residues 185–188 (TSKD). The helical transmembrane segment at 189-209 (VCIGPVAVMSLQTAKVIADVT) threads the bilayer. The Extracellular portion of the chain corresponds to 210–221 (AKYPDGDSAITG). A helical membrane pass occupies residues 222–242 (PVIATTLALLCGIISAAVGFL). Residues 243 to 244 (RL) lie on the Cytoplasmic side of the membrane. The helical transmembrane segment at 245-265 (GFLVELISLNAVAGFMTGSAF) threads the bilayer. Residues 266-305 (NILWGQVPALMGYNSLVNTRAATYKVVIETLKHLPDTKLD) are Extracellular-facing. A helical membrane pass occupies residues 306 to 326 (AVFGLIPLFLLYVWKWWCGTY). Residues 327 to 350 (GPRLNDRYNSKNPRLHKIIKWTYF) lie on the Cytoplasmic side of the membrane. A helical membrane pass occupies residues 351-371 (YAQASRNGIIIIVFTCIGWAI). Residues 372–399 (TRGKSKSERPISILGSVPSGLKEVGVFH) are Extracellular-facing. The helical transmembrane segment at 400–420 (VPPGLMSKLGPNLPASIIVLL) threads the bilayer. At 421 to 443 (LEHIAISKSFGRINDYKVVPDQE) the chain is on the cytoplasmic side. Residues 444–464 (LIAIGVSNLLGTFFNAYPATG) traverse the membrane as a helical segment. The Extracellular portion of the chain corresponds to 465-483 (SFSRSALKAKCNVRTPLSG). Residues 484 to 504 (LFSGSCVLLALYCLTGAFFYI) form a helical membrane-spanning segment. Residues 505-532 (PKATLSAVIIHAVSDLLASYQTTWNFWK) lie on the Cytoplasmic side of the membrane. A helical membrane pass occupies residues 533–551 (MNPLDFICFIVTVLITVFA). At 552 to 559 (SIEDGIYF) the chain is on the extracellular side. The chain crosses the membrane as a helical span at residues 560-580 (AMCWSCAMLILKVAFPAGKFL). The Cytoplasmic segment spans residues 581 to 893 (GRVEVAEVTD…DIPDFAKWDI (313 aa)). Residues 676–854 (DVQILPPPDG…SIVAGHTSYH (179 aa)) form the STAS domain.

It belongs to the SLC26A/SulP transporter (TC 2.A.53) family.

The protein localises to the membrane. Its function is as follows. High affinity uptake of sulfate into the cell. This chain is Sulfate permease 2 (SUL2), found in Saccharomyces cerevisiae (strain ATCC 204508 / S288c) (Baker's yeast).